Reading from the N-terminus, the 236-residue chain is Kinetochore protein Spc25 (236 aa).

Residues 44–106 (KNIISAKEAI…DMEAQLLRHT (63 aa)) adopt a coiled-coil conformation. A disordered region spans residues 194 to 217 (EVAGASPVTPSGSERPKATSKHSN).

It belongs to the SPC25 family. As to quaternary structure, component of the Ndc80 complex, which is composed of Ndc80, Nuf2 and Spc25.

The protein localises to the nucleus. It is found in the chromosome. Its subcellular location is the centromere. It localises to the kinetochore. Acts as a component of the essential kinetochore-associated Ndc80 complex, which is required for chromosome segregation and spindle checkpoint activity during meiosis and mitosis. Required for kinetochore integrity and the organization of stable microtubule binding sites in the outer plate of the kinetochore. Participates in SAC signaling that responds specifically to disruptions in spindle microtubule dynamics. The NDC80 complex synergistically enhances the affinity of the SKA1 complex for microtubules and may allow the NDC80 complex to track depolymerizing microtubules. In Drosophila persimilis (Fruit fly), this protein is Kinetochore protein Spc25.